The following is a 34-amino-acid chain: Sarcoplasmic/endoplasmic reticulum calcium ATPase regulator DWORF (34 aa).

A helical transmembrane segment spans residues 12-32; the sequence is IVPILLLVGWIVGCIIVIYIV.

In terms of assembly, homooligomer. Can also form heterooligomers with other sarcoplasmic/endoplasmic reticulum calcium ATPase (SERCA) regulators ARLN, ERLN, PLN and SLN. Monomer. Interacts with ATP2A1/SERCA1; the interaction results in activation of ATP2A1. Interacts as a monomer with ATP2A2/SERCA2; the interaction results in activation of ATP2A2. As to expression, highly expressed in heart (at protein level). Detected in heart and soleus, a postural muscle group of the hindlimb containing the highest enrichment of slow-twitch muscle fibers. Also expressed in diaphragm, which contains some slow-twitch fibers. Not detected in the quadriceps, a fast-twitch muscle group, or in cardiac atrial muscle. Not expressed in the prenatal heart but gradually increases in abundance postnatally.

It localises to the sarcoplasmic reticulum membrane. In terms of biological role, enhances the activity of ATP2A1/SERCA1 ATPase in sarcoplasmic reticulum by displacing ATP2A1/SERCA1 inhibitors, thereby acting as a key regulator of skeletal muscle activity. Also enhances the activity of the ATP2A2/SERCA2 ATPase. Does not directly stimulate SERCA pump activity. Binds preferentially to the phosphorylated E1 and E2 conformational forms of ATP2A2 which predominate at high Ca(2+) concentrations during the systolic phase of the cardiac cycle. Competes with ATP2A2 inhibitor phospholamban (PLN) for binding to ATP2A2 and displaces PLN. Can activate ATP2A2 directly in the absence of PLN. Also enhances sarcoplasmic reticulum Ca(2+) uptake and myocyte contractility by displacing the SERCA inhibitory peptides sarcolipin (SLN) and myoregulin (MRLN). This chain is Sarcoplasmic/endoplasmic reticulum calcium ATPase regulator DWORF, found in Mus musculus (Mouse).